A 204-amino-acid polypeptide reads, in one-letter code: MTEWETAAPAVAETPDIKLFGKWSTDDVQINDISLQDYIAVKEKYAKYLPHSAGRYAAKRFRKAQCPIVERLTNSMMMHGRNNGKKLMTVRIVKHAFEIIHLLTGENPLQVLVNAIINSGPREDSTRIGRAGTVRRQAVDVSPLRRVNQAIWLLCTGAREAAFRNIKTIAECLADELINAAKGSSNSYAIKKKDELERVAKSNR.

N-acetylmethionine is present on methionine 1. The residue at position 2 (threonine 2) is an N-acetylthreonine; in 40S ribosomal protein S5, N-terminally processed. Threonine 14 carries the post-translational modification Phosphothreonine. At lysine 47 the chain carries N6-acetyllysine; alternate. Residue lysine 47 forms a Glycyl lysine isopeptide (Lys-Gly) (interchain with G-Cter in SUMO2); alternate linkage. Serine 142 is modified (phosphoserine).

Belongs to the universal ribosomal protein uS7 family. Component of the small ribosomal subunit. Part of the small subunit (SSU) processome, composed of more than 70 proteins and the RNA chaperone small nucleolar RNA (snoRNA) U3.

The protein resides in the cytoplasm. It localises to the nucleus. It is found in the nucleolus. Component of the small ribosomal subunit. The ribosome is a large ribonucleoprotein complex responsible for the synthesis of proteins in the cell. Part of the small subunit (SSU) processome, first precursor of the small eukaryotic ribosomal subunit. During the assembly of the SSU processome in the nucleolus, many ribosome biogenesis factors, an RNA chaperone and ribosomal proteins associate with the nascent pre-rRNA and work in concert to generate RNA folding, modifications, rearrangements and cleavage as well as targeted degradation of pre-ribosomal RNA by the RNA exosome. This chain is Small ribosomal subunit protein uS7 (RPS5), found in Bos taurus (Bovine).